The sequence spans 182 residues: Large ribosomal subunit protein uL5c (182 aa).

This sequence belongs to the universal ribosomal protein uL5 family. Part of the 50S ribosomal subunit; contacts the 5S rRNA.

The protein localises to the plastid. Its subcellular location is the chloroplast. In terms of biological role, binds 5S rRNA, forms part of the central protuberance of the 50S subunit. The chain is Large ribosomal subunit protein uL5c (rpl5) from Cyanidium caldarium (Red alga).